A 657-amino-acid polypeptide reads, in one-letter code: uncharacterized protein (657 aa).

At serine 114 the chain carries Phosphoserine. Disordered stretches follow at residues leucine 142–glutamate 216, serine 228–glutamate 248, serine 291–proline 312, serine 335–aspartate 354, and alanine 399–histidine 522. Positions alanine 143 to lysine 169 are enriched in polar residues. Basic and acidic residues predominate over residues alanine 190–arginine 206. The residue at position 213 (serine 213) is a Phosphoserine. Composition is skewed to polar residues over residues threonine 234–valine 243 and serine 301–proline 312. Residues glutamate 343–aspartate 354 are compositionally biased toward acidic residues. The span at serine 437–serine 451 shows a compositional bias: low complexity. A compositionally biased stretch (polar residues) spans asparagine 462–threonine 484. The segment covering alanine 485–leucine 495 has biased composition (basic and acidic residues). A compositionally biased stretch (polar residues) spans serine 499–alanine 513.

This is an uncharacterized protein from Homo sapiens (Human).